The sequence spans 180 residues: YY1-associated factor 2 (180 aa).

3 disordered regions span residues 1–24 (MGDK…GYWD), 47–120 (GTST…EVTV), and 132–180 (EKTK…GESH). Residues 19-48 (DEGYWDCSVCTFRNSAEAFKCMMCDVRKGT) form a RanBP2-type zinc finger. The segment covering 62–73 (QQVTQQFVPPTQ) has biased composition (low complexity). Over residues 74–93 (SKKEKKDKVEKEKSEKETTS) the composition is skewed to basic and acidic residues. Basic residues predominate over residues 95–105 (KNSHKKTRPRL). 2 stretches are compositionally biased toward low complexity: residues 136–156 (SPPA…SSSD) and 163–174 (SRSSSPRGEASS). Ser167 is subject to Phosphoserine.

In terms of assembly, interacts with MYC, MYCN, RNF2/RING1B and YY1. Part of the E2F6.com-1 complex in G0 phase composed of E2F6, MGA, MAX, TFDP1, CBX3, BAT8, EUHMTASE1, RING1, RNF2, MBLR, L3MBTL2 and YAF2.

The protein resides in the nucleus. Its function is as follows. Binds to MYC and inhibits MYC-mediated transactivation. Also binds to MYCN and enhances MYCN-dependent transcriptional activation. Increases calpain 2-mediated proteolysis of YY1 in vitro. Component of the E2F6.com-1 complex, a repressive complex that methylates 'Lys-9' of histone H3, suggesting that it is involved in chromatin-remodeling. The sequence is that of YY1-associated factor 2 (YAF2) from Homo sapiens (Human).